The chain runs to 153 residues: MVVKAVCVINGDAKGTVFFEQESSETPVKVSGEVCGLAKGLHGFHVHEFGDNTNGCMSSGPHFNPYGKEHGAPVDENRHLGDLGNIEATGDCPTKVSITDSKITLFGADSIIGRTVVVHADADDLGQGGHELSKSTGNAGARIGCGVIGIAKV.

The Cu cation site is built by histidine 45, histidine 47, and histidine 62. A disulfide bridge links cysteine 56 with cysteine 145. Residues histidine 62, histidine 70, histidine 79, and aspartate 82 each coordinate Zn(2+). Histidine 119 provides a ligand contact to Cu cation.

It belongs to the Cu-Zn superoxide dismutase family. Homodimer. It depends on Cu cation as a cofactor. Zn(2+) is required as a cofactor.

The protein resides in the cytoplasm. It carries out the reaction 2 superoxide + 2 H(+) = H2O2 + O2. Functionally, destroys radicals which are normally produced within the cells and which are toxic to biological systems. The sequence is that of Superoxide dismutase [Cu-Zn] from Drosophila teissieri (Fruit fly).